A 351-amino-acid chain; its full sequence is MALPFQKGLEKYKNIDEDELLGKLSEEELKQLENVLDDLDPESATLPAGFRQKDQTQKAATGPFDREHLLMYLEKEALEQKDREDFVPFTGEKKGRVFIPKEKPVETRKEEKVTLDPELEEALASASDTELYDLAAVLGVHNLLNNPKFDEETTNGQGRKGPVRNVVKGEKAKPVFEEPPNPTNVEASLQQMKANDPSLQEVNLNNIKNIPIPTLKEFAKALETNTHVRKFSLAATRSNDPVALAFAEMLKVNKTLKSLNVESNFITGAGILALVEALRENDTLTEIKIDNQRQQLGTAVEMEIAQMLEENSRILKFGYQFTKQGPRTRVAAAITKNNDLVRKKRVEGDRR.

Ser25 bears the Phosphoserine mark.

The protein belongs to the tropomodulin family. In terms of assembly, binds to the N-terminus of tropomyosin and to actin. Binds to TMBr3 as well as to other low molecular mass tropomyosins (TM5a or TM5), but not to high molecular mass tropomyosins (TM2 or TMBr1). As to expression, neuronal-tissue specific.

The protein resides in the cytoplasm. Its subcellular location is the cytoskeleton. Blocks the elongation and depolymerization of the actin filaments at the pointed end. The Tmod/TM complex contributes to the formation of the short actin protofilament, which in turn defines the geometry of the membrane skeleton. The protein is Tropomodulin-2 (Tmod2) of Rattus norvegicus (Rat).